The following is a 239-amino-acid chain: Cysteine-rich venom protein 2 (239 aa).

Residues 1-19 (MIALIVLPILAAVLQQSSG) form the signal peptide. Positions 38-166 (VDLHNSLRRS…EYSYFYVCQY (129 aa)) constitute an SCP domain. Cystine bridges form between C75–C153, C92–C167, C148–C164, C186–C193, C189–C198, C202–C234, and C219–C232. A ShKT domain is found at 198-234 (CTNPCPKKISTQLPRFGPQAGCQDKQMQSDCSATCFC).

It belongs to the CRISP family. Expressed by the venom gland.

It localises to the secreted. In terms of biological role, weakly blocks contraction of smooth muscle elicited by high potassium-induced depolarization, but does not block caffeine-stimulated contraction. May target voltage-gated calcium channels on smooth muscle. This is Cysteine-rich venom protein 2 from Sistrurus catenatus edwardsii (Desert massasauga).